The primary structure comprises 515 residues: MNTRNMFDILRKGIFKDEITQIEKILLKMEDNTYEYVDVFLEKYESQQKLLLKLTKAITEYLSNLKPQLSKQENIYVKHIKSSNEAKTELEIFNCYKEISISKEKKINSLLKLVRESAQDYTINEENDILYHSEISAKKNASPMEFGDASFDLEKQRLHFANSNLHSIESERNESSLSLDSGESEKKSEEDNGNGEQNYIPEQYERLDSPVKEKIINTCCKGKAEPPNYERIKPKAKKGNQMQKIKISKLGTAETQTEDVMNKSSQKENNDILRKHKTSVKFPTNLDALNSCTMENHEINELTATNKMNDGPITKCARETINIKNLKTSNLERNQNSPKNKRTVSYERLANSFSFNALNDYNLKKGGEKLRKKAIKRALKDRGSQDKAYGGVVQSNSRQPKVGFHVNNSSSGHNDNEGNHSLILSSKTKSPQLFNNEKKDESYSGFSNTNSYAIEETSRALMGTSKTRKPENKSKYLIKNGWFEDSLNSEIWSDANPLDWRKTDILEESTSIVYK.

Residues 165–204 are disordered; the sequence is LHSIESERNESSLSLDSGESEKKSEEDNGNGEQNYIPEQY.

Functionally, has a role in meiosis. This is Meiotically up-regulated gene 68 protein (mug68) from Schizosaccharomyces pombe (strain 972 / ATCC 24843) (Fission yeast).